A 443-amino-acid polypeptide reads, in one-letter code: Thymidine phosphorylase (443 aa).

The protein belongs to the thymidine/pyrimidine-nucleoside phosphorylase family. Homodimer.

It carries out the reaction thymidine + phosphate = 2-deoxy-alpha-D-ribose 1-phosphate + thymine. The protein operates within pyrimidine metabolism; dTMP biosynthesis via salvage pathway; dTMP from thymine: step 1/2. Functionally, the enzymes which catalyze the reversible phosphorolysis of pyrimidine nucleosides are involved in the degradation of these compounds and in their utilization as carbon and energy sources, or in the rescue of pyrimidine bases for nucleotide synthesis. The protein is Thymidine phosphorylase of Aliivibrio salmonicida (strain LFI1238) (Vibrio salmonicida (strain LFI1238)).